A 167-amino-acid polypeptide reads, in one-letter code: NADH-quinone oxidoreductase subunit B (167 aa).

Cys-40, Cys-41, Cys-105, and Cys-134 together coordinate [4Fe-4S] cluster.

This sequence belongs to the complex I 20 kDa subunit family. As to quaternary structure, NDH-1 is composed of 14 different subunits. Subunits NuoB, C, D, E, F, and G constitute the peripheral sector of the complex. Requires [4Fe-4S] cluster as cofactor.

It is found in the cell inner membrane. The enzyme catalyses a quinone + NADH + 5 H(+)(in) = a quinol + NAD(+) + 4 H(+)(out). NDH-1 shuttles electrons from NADH, via FMN and iron-sulfur (Fe-S) centers, to quinones in the respiratory chain. The immediate electron acceptor for the enzyme in this species is believed to be ubiquinone. Couples the redox reaction to proton translocation (for every two electrons transferred, four hydrogen ions are translocated across the cytoplasmic membrane), and thus conserves the redox energy in a proton gradient. This chain is NADH-quinone oxidoreductase subunit B, found in Campylobacter jejuni (strain RM1221).